The following is a 31-amino-acid chain: Cyclotide mden-N (31 aa).

The segment at residues 1-31 is a cross-link (cyclopeptide (Gly-Asn)); that stretch reads GTIPCGESCVYIPCLTSALGCSCKNKVCYRN. 3 cysteine pairs are disulfide-bonded: Cys5–Cys21, Cys9–Cys23, and Cys14–Cys28.

The protein belongs to the cyclotide family. Bracelet subfamily. This is a cyclic peptide.

Functionally, probably participates in a plant defense mechanism. The polypeptide is Cyclotide mden-N (Melicytus dentatus (Tree violet)).